We begin with the raw amino-acid sequence, 293 residues long: Large ribosomal RNA subunit accumulation protein YCED homolog 1, chloroplastic (293 aa).

The N-terminal 42 residues, 1-42 (MYYPQPTVSLAAAVALLRPSLRRHSQRASSLLRSSTPPPWVS), are a transit peptide targeting the chloroplast.

The protein belongs to the DUF177 domain family. As to expression, highly expressed in shoots and leaves. Detected in roots, embryos and endosperm.

It is found in the plastid. Its subcellular location is the chloroplast. Plays a role in synthesis, processing and/or stability of 23S rRNA. Required for embryogenesis. May be involved in RPL23 transcript levels regulation in non-photosynthetic plastids. The protein is Large ribosomal RNA subunit accumulation protein YCED homolog 1, chloroplastic of Zea mays (Maize).